Consider the following 62-residue polypeptide: U-myrmeciitoxin(01)-Mg3a (62 aa).

The first 24 residues, 1–24 (MKTTVILLLAIAIIFAIMTTLTSA), serve as a signal peptide directing secretion.

In terms of tissue distribution, expressed by the venom gland.

The protein localises to the secreted. In terms of biological role, may have antimicrobial properties, like most ant linear peptides. This chain is U-myrmeciitoxin(01)-Mg3a, found in Myrmecia gulosa (Red bulldog ant).